The sequence spans 436 residues: tRNA-2-methylthio-N(6)-dimethylallyladenosine synthase (436 aa).

Residues 5–120 (KKLFIQTLGC…IKDVVDVKGA (116 aa)) form the MTTase N-terminal domain. Residues Cys14, Cys51, Cys83, Cys152, Cys156, and Cys159 each contribute to the [4Fe-4S] cluster site. A Radical SAM core domain is found at 138-372 (KTNKYRASVN…IELHKRYLEE (235 aa)). The TRAM domain maps to 375–436 (PKLIGETLNI…RTSLKGEVVN (62 aa)).

The protein belongs to the methylthiotransferase family. MiaB subfamily. As to quaternary structure, monomer. Requires [4Fe-4S] cluster as cofactor.

It is found in the cytoplasm. It carries out the reaction N(6)-dimethylallyladenosine(37) in tRNA + (sulfur carrier)-SH + AH2 + 2 S-adenosyl-L-methionine = 2-methylsulfanyl-N(6)-dimethylallyladenosine(37) in tRNA + (sulfur carrier)-H + 5'-deoxyadenosine + L-methionine + A + S-adenosyl-L-homocysteine + 2 H(+). Functionally, catalyzes the methylthiolation of N6-(dimethylallyl)adenosine (i(6)A), leading to the formation of 2-methylthio-N6-(dimethylallyl)adenosine (ms(2)i(6)A) at position 37 in tRNAs that read codons beginning with uridine. This is tRNA-2-methylthio-N(6)-dimethylallyladenosine synthase from Aliarcobacter butzleri (strain RM4018) (Arcobacter butzleri).